Reading from the N-terminus, the 560-residue chain is Membrane protein insertase YidC (560 aa).

Residues M1 to L21 traverse the membrane as a helical segment. The interval V42 to A66 is disordered. Helical transmembrane passes span L341–L361, L367–F387, L437–L457, W468–M488, and P515–V535.

This sequence belongs to the OXA1/ALB3/YidC family. Type 1 subfamily. In terms of assembly, interacts with the Sec translocase complex via SecD. Specifically interacts with transmembrane segments of nascent integral membrane proteins during membrane integration.

The protein localises to the cell inner membrane. Its function is as follows. Required for the insertion and/or proper folding and/or complex formation of integral membrane proteins into the membrane. Involved in integration of membrane proteins that insert both dependently and independently of the Sec translocase complex, as well as at least some lipoproteins. Aids folding of multispanning membrane proteins. The chain is Membrane protein insertase YidC from Pseudomonas putida (strain ATCC 47054 / DSM 6125 / CFBP 8728 / NCIMB 11950 / KT2440).